The chain runs to 415 residues: Tyrosine--tRNA ligase (415 aa).

L-tyrosine is bound at residue Tyr34. The 'HIGH' region signature appears at 39–48; the sequence is PSAKSIHLGN. The L-tyrosine site is built by Tyr163 and Gln167. Positions 225 to 229 match the 'KMSKS' region motif; it reads KFGKS. Residue Lys228 coordinates ATP. The S4 RNA-binding domain maps to 349 to 414; the sequence is EKIIDILDRA…GKKKIFIIKK (66 aa).

This sequence belongs to the class-I aminoacyl-tRNA synthetase family. TyrS type 1 subfamily. As to quaternary structure, homodimer.

The protein resides in the cytoplasm. The enzyme catalyses tRNA(Tyr) + L-tyrosine + ATP = L-tyrosyl-tRNA(Tyr) + AMP + diphosphate + H(+). In terms of biological role, catalyzes the attachment of tyrosine to tRNA(Tyr) in a two-step reaction: tyrosine is first activated by ATP to form Tyr-AMP and then transferred to the acceptor end of tRNA(Tyr). This is Tyrosine--tRNA ligase from Mycoplasma mobile (strain ATCC 43663 / 163K / NCTC 11711) (Mesomycoplasma mobile).